The chain runs to 150 residues: SsrA-binding protein (150 aa).

The protein belongs to the SmpB family.

The protein resides in the cytoplasm. Required for rescue of stalled ribosomes mediated by trans-translation. Binds to transfer-messenger RNA (tmRNA), required for stable association of tmRNA with ribosomes. tmRNA and SmpB together mimic tRNA shape, replacing the anticodon stem-loop with SmpB. tmRNA is encoded by the ssrA gene; the 2 termini fold to resemble tRNA(Ala) and it encodes a 'tag peptide', a short internal open reading frame. During trans-translation Ala-aminoacylated tmRNA acts like a tRNA, entering the A-site of stalled ribosomes, displacing the stalled mRNA. The ribosome then switches to translate the ORF on the tmRNA; the nascent peptide is terminated with the 'tag peptide' encoded by the tmRNA and targeted for degradation. The ribosome is freed to recommence translation, which seems to be the essential function of trans-translation. This is SsrA-binding protein from Borreliella afzelii (strain PKo) (Borrelia afzelii).